The sequence spans 170 residues: NADH-quinone oxidoreductase subunit J (170 aa).

A run of 5 helical transmembrane segments spans residues 1–21, 30–50, 56–76, 94–114, and 138–158; these read MEFV…FVII, VYLI…GAFF, VIIY…MLNI, IGPS…IFFL, and VFLV…IFHI.

It belongs to the complex I subunit 6 family. Composed of 13 different subunits. Subunits NuoA, H, J, K, L, M, N constitute the membrane sector of the complex.

The protein resides in the cell membrane. The catalysed reaction is a quinone + NADH + 5 H(+)(in) = a quinol + NAD(+) + 4 H(+)(out). Functionally, NDH-1 shuttles electrons from NADH, via FMN and iron-sulfur (Fe-S) centers, to quinones in the respiratory chain. Couples the redox reaction to proton translocation (for every two electrons transferred, four hydrogen ions are translocated across the cytoplasmic membrane), and thus conserves the redox energy in a proton gradient. The polypeptide is NADH-quinone oxidoreductase subunit J (nuoJ) (Buchnera aphidicola subsp. Acyrthosiphon pisum (strain APS) (Acyrthosiphon pisum symbiotic bacterium)).